The chain runs to 700 residues: Methionine--tRNA ligase (700 aa).

Residues 13-23 (PYANGDIHLGH) carry the 'HIGH' region motif. The Zn(2+) site is built by Cys144, Cys147, Cys157, and Cys160. The 'KMSKS' region motif lies at 341–345 (KMSKS). Lys344 is a binding site for ATP. The tRNA-binding domain maps to 598–700 (DFAKVEMKVA…DNCVIGDLLA (103 aa)).

The protein belongs to the class-I aminoacyl-tRNA synthetase family. MetG type 1 subfamily. As to quaternary structure, homodimer. It depends on Zn(2+) as a cofactor.

It is found in the cytoplasm. It catalyses the reaction tRNA(Met) + L-methionine + ATP = L-methionyl-tRNA(Met) + AMP + diphosphate. In terms of biological role, is required not only for elongation of protein synthesis but also for the initiation of all mRNA translation through initiator tRNA(fMet) aminoacylation. This Psychrobacter arcticus (strain DSM 17307 / VKM B-2377 / 273-4) protein is Methionine--tRNA ligase.